Consider the following 892-residue polypeptide: Alpha-actinin-1 (892 aa).

N-acetylmethionine is present on Met1. An actin-binding region spans residues 1 to 247 (MDHYDSQQTN…IMTYVSSFYH (247 aa)). A Phosphoserine modification is found at Ser6. Residue Tyr12 is modified to Phosphotyrosine; by FAK1. 2 consecutive Calponin-homology (CH) domains span residues 31 to 135 (KQQR…LRFA) and 144 to 250 (TSAK…HAFS). N6-acetyllysine is present on residues Lys95 and Lys195. 4 Spectrin repeats span residues 274–384 (QLME…WLLN), 394–499 (HLAE…ALER), 509–620 (QLYL…ALTE), and 630–733 (RLRK…EVEN). Positions 274–733 (QLMEDYEKLA…IARTINEVEN (460 aa)) are interaction with DDN. Ser471 bears the Phosphoserine mark. Lys676 carries the N6-acetyllysine modification. The residue at position 677 (Ser677) is a Phosphoserine. EF-hand domains lie at 746–781 (EQMN…LGYD) and 787–822 (QGEA…ETAD). Residues Asp759, Asp761, Ser763, Thr765, and Glu770 each coordinate Ca(2+). The residue at position 890 (Ser890) is a Phosphoserine.

This sequence belongs to the alpha-actinin family. Homodimer; antiparallel. Interacts with MYOZ2, TTID and LPP. Interacts with DDN. Interacts with PSD. Interacts with MICALL2. Interacts with DNM2 and CTTN. Interacts with PDLIM1. Interacts with PDLIM2. Interacts with PDLIM4 (via PDZ domain). Interacts with IGSF8.

It is found in the cytoplasm. It localises to the cytoskeleton. The protein resides in the myofibril. The protein localises to the sarcomere. Its subcellular location is the z line. It is found in the cell membrane. It localises to the cell junction. The protein resides in the cell projection. The protein localises to the ruffle. In terms of biological role, F-actin cross-linking protein which is thought to anchor actin to a variety of intracellular structures. Association with IGSF8 regulates the immune synapse formation and is required for efficient T-cell activation. In Homo sapiens (Human), this protein is Alpha-actinin-1 (ACTN1).